The sequence spans 786 residues: Spermatogenesis-associated protein 20 (786 aa).

A signal peptide spans 1-22 (MLGARAWLGRVLLLPRAGAGLA). The tract at residues 23-61 (ASRRGSSSRDKDRSATVSSSVPMPAGGKGSHPSSTPQRV) is disordered. Ser-649 bears the Phosphoserine mark.

Its subcellular location is the secreted. Its function is as follows. May play a role in fertility regulation. In Homo sapiens (Human), this protein is Spermatogenesis-associated protein 20 (SPATA20).